We begin with the raw amino-acid sequence, 461 residues long: V-type ATP synthase beta chain 1 (461 aa).

It belongs to the ATPase alpha/beta chains family.

In terms of biological role, produces ATP from ADP in the presence of a proton gradient across the membrane. The V-type beta chain is a regulatory subunit. The polypeptide is V-type ATP synthase beta chain 1 (Clostridium tetani (strain Massachusetts / E88)).